The primary structure comprises 148 residues: Large ribosomal subunit protein bL9 (148 aa).

Belongs to the bacterial ribosomal protein bL9 family.

In terms of biological role, binds to the 23S rRNA. The polypeptide is Large ribosomal subunit protein bL9 (Staphylococcus saprophyticus subsp. saprophyticus (strain ATCC 15305 / DSM 20229 / NCIMB 8711 / NCTC 7292 / S-41)).